Here is a 40-residue protein sequence, read N- to C-terminus: Dolichyl-diphosphooligosaccharide--protein glycosyltransferase subunit 4 (40 aa).

The Lumenal segment spans residues 1–4; sequence MISD. A helical membrane pass occupies residues 5–25; sequence VQLAIFSNVLGVFLFLLVVAY. Topologically, residues 26-40 are cytoplasmic; the sequence is HYINANTGKPSAKAK.

The protein belongs to the OST4 family. As to quaternary structure, component of the oligosaccharyltransferase (OST) complex.

It is found in the endoplasmic reticulum membrane. Subunit of the oligosaccharyl transferase (OST) complex that catalyzes the initial transfer of a defined glycan (Glc(3)Man(9)GlcNAc(2) in eukaryotes) from the lipid carrier dolichol-pyrophosphate to an asparagine residue within an Asn-X-Ser/Thr consensus motif in nascent polypeptide chains, the first step in protein N-glycosylation. N-glycosylation occurs cotranslationally and the complex associates with the Sec61 complex at the channel-forming translocon complex that mediates protein translocation across the endoplasmic reticulum (ER). All subunits are required for a maximal enzyme activity. In Drosophila yakuba (Fruit fly), this protein is Dolichyl-diphosphooligosaccharide--protein glycosyltransferase subunit 4.